A 437-amino-acid chain; its full sequence is 3-phosphoshikimate 1-carboxyvinyltransferase (437 aa).

3-phosphoshikimate contacts are provided by Lys21, Ser22, and Arg26. Lys21 provides a ligand contact to phosphoenolpyruvate. Phosphoenolpyruvate-binding residues include Gly101 and Arg129. 3-phosphoshikimate contacts are provided by Ser172, Ser173, Gln174, Ser200, Asp314, and Lys341. Gln174 contributes to the phosphoenolpyruvate binding site. The active-site Proton acceptor is the Asp314. 3 residues coordinate phosphoenolpyruvate: Arg345, Arg388, and Lys414.

This sequence belongs to the EPSP synthase family. In terms of assembly, monomer.

It localises to the cytoplasm. The catalysed reaction is 3-phosphoshikimate + phosphoenolpyruvate = 5-O-(1-carboxyvinyl)-3-phosphoshikimate + phosphate. It functions in the pathway metabolic intermediate biosynthesis; chorismate biosynthesis; chorismate from D-erythrose 4-phosphate and phosphoenolpyruvate: step 6/7. Functionally, catalyzes the transfer of the enolpyruvyl moiety of phosphoenolpyruvate (PEP) to the 5-hydroxyl of shikimate-3-phosphate (S3P) to produce enolpyruvyl shikimate-3-phosphate and inorganic phosphate. In Clostridioides difficile (strain 630) (Peptoclostridium difficile), this protein is 3-phosphoshikimate 1-carboxyvinyltransferase.